We begin with the raw amino-acid sequence, 401 residues long: Phosphoglycerate kinase (401 aa).

Substrate contacts are provided by residues 20-22 (DFN), Arg-35, 58-61 (HLGR), Arg-117, and Arg-154. Residues Lys-204, Gly-298, Glu-329, and 358–361 (GGDS) contribute to the ATP site.

The protein belongs to the phosphoglycerate kinase family. In terms of assembly, monomer.

The protein localises to the cytoplasm. The enzyme catalyses (2R)-3-phosphoglycerate + ATP = (2R)-3-phospho-glyceroyl phosphate + ADP. It functions in the pathway carbohydrate degradation; glycolysis; pyruvate from D-glyceraldehyde 3-phosphate: step 2/5. The sequence is that of Phosphoglycerate kinase from Bifidobacterium longum (strain DJO10A).